A 181-amino-acid chain; its full sequence is Squamosa promoter-binding-like protein 5 (181 aa).

The span at 1–10 (MEGQRTQRRG) shows a compositional bias: basic residues. A disordered region spans residues 1 to 58 (MEGQRTQRRGYLKDKATVSNLVEEEMENGMDGEEEDGGDEDKRKKVMERVRGPSTDRV). The segment covering 22–39 (VEEEMENGMDGEEEDGGD) has biased composition (acidic residues). Positions 40-51 (EDKRKKVMERVR) are enriched in basic and acidic residues. The SBP-type zinc finger occupies 60-137 (SRLCQVDRCT…AGHNERRRKI (78 aa)). The Zn(2+) site is built by C63, C68, C85, H88, C104, C107, H111, and C123. The Bipartite nuclear localization signal signature appears at 120-136 (KRSCRRRLAGHNERRRK). The interval 128-181 (AGHNERRRKISGDSFGEGSGRRGFSGQLIQTQERNRVDRKLPMTNSSFKRPQIR) is disordered. Polar residues predominate over residues 170–181 (MTNSSFKRPQIR).

Requires Zn(2+) as cofactor. Expressed in the inflorescence apical meristem and young flowers.

The protein resides in the nucleus. Its subcellular location is the cytoplasm. In terms of biological role, trans-acting factor that binds specifically to the consensus nucleotide sequence 5'-TNCGTACAA-3' of AP1 promoter. Promotes both vegetative phase change and flowering. This is Squamosa promoter-binding-like protein 5 (SPL5) from Arabidopsis thaliana (Mouse-ear cress).